The sequence spans 82 residues: Cytochrome b559 subunit alpha (82 aa).

The helical transmembrane segment at 22–36 (IIHAVTLPAIFIAGF) threads the bilayer. H24 serves as a coordination point for heme.

The protein belongs to the PsbE/PsbF family. Heterodimer of an alpha subunit and a beta subunit. PSII is composed of 1 copy each of membrane proteins PsbA, PsbB, PsbC, PsbD, PsbE, PsbF, PsbH, PsbI, PsbJ, PsbK, PsbL, PsbM, PsbT, PsbX, PsbY, Psb30/Ycf12, peripheral proteins PsbO, CyanoQ (PsbQ), PsbU, PsbV and a large number of cofactors. It forms dimeric complexes. Heme b is required as a cofactor.

The protein localises to the cellular thylakoid membrane. Its function is as follows. This b-type cytochrome is tightly associated with the reaction center of photosystem II (PSII). PSII is a light-driven water:plastoquinone oxidoreductase that uses light energy to abstract electrons from H(2)O, generating O(2) and a proton gradient subsequently used for ATP formation. It consists of a core antenna complex that captures photons, and an electron transfer chain that converts photonic excitation into a charge separation. The sequence is that of Cytochrome b559 subunit alpha from Prochlorococcus marinus (strain MIT 9515).